A 310-amino-acid chain; its full sequence is N-acetyl-gamma-glutamyl-phosphate reductase (310 aa).

The active site involves cysteine 117.

This sequence belongs to the NAGSA dehydrogenase family. Type 2 subfamily.

It is found in the cytoplasm. The enzyme catalyses N-acetyl-L-glutamate 5-semialdehyde + phosphate + NADP(+) = N-acetyl-L-glutamyl 5-phosphate + NADPH + H(+). Its pathway is amino-acid biosynthesis; L-arginine biosynthesis; N(2)-acetyl-L-ornithine from L-glutamate: step 3/4. In terms of biological role, catalyzes the NADPH-dependent reduction of N-acetyl-5-glutamyl phosphate to yield N-acetyl-L-glutamate 5-semialdehyde. In Brucella melitensis biotype 1 (strain ATCC 23456 / CCUG 17765 / NCTC 10094 / 16M), this protein is N-acetyl-gamma-glutamyl-phosphate reductase.